The primary structure comprises 128 residues: MRHRKSGRQLNRNSSHRKAMFSNMASSLVRHEVIKTTLPKAKELRRVVEPLITLAKTDSVANRRLAFARTRDNEVVAKLFNELGPRFAARQGGYTRILKCGFRAGDKAPMAYIELVDRPEAAVEAAAE.

This sequence belongs to the bacterial ribosomal protein bL17 family. In terms of assembly, part of the 50S ribosomal subunit. Contacts protein L32.

This is Large ribosomal subunit protein bL17 from Vibrio cholerae serotype O1 (strain ATCC 39541 / Classical Ogawa 395 / O395).